The following is a 504-amino-acid chain: MSSLTGKVKGRARKIKGDADIRINESTENVGLVIRVMTAVVDIKFPSGKVPKILNALESKEIYNGKKLVLEVSQHISDSIVRCIALDSTDGLSRNDEFIDTGAPISVPVGRATLGRVFDVLGNPIDNCGPLTKSDYSIKPIYSEVPKLTDQKVTTEILVTGIKVIDLLAPYLKGGKVGLFGGAGVGKTVLIMELIHNIAKAHKGVSVFAGVGERTREGNDLYHEMIESGVINLEEKDKSQAVLVYGQMNEPPGARLRVALSALTMAEYFRDVENQDVLFFVDNIFRFTQSGSEISALLGRIPSAVGYQPTLAAEMGAMQERITSTNRGSITSVQAIYVPADDLTDPAPATSFAHLDSTTVLSRQIAELGIYPAVDPLDSASQALSIDIVGEKHYEVSKEVQRILQTYKSLQDIIAILGMEELSEEDKLIVARARKIQRFLSQPFHVAEVFTGTPGVFVSLEDTVSSFKDIVEGKYDHLPEAAFYMVSNINEAVKKAELLQKEGK.

181-188 lines the ATP pocket; sequence GGAGVGKT.

Belongs to the ATPase alpha/beta chains family. F-type ATPases have 2 components, CF(1) - the catalytic core - and CF(0) - the membrane proton channel. CF(1) has five subunits: alpha(3), beta(3), gamma(1), delta(1), epsilon(1). CF(0) has three main subunits: a(1), b(2) and c(9-12). The alpha and beta chains form an alternating ring which encloses part of the gamma chain. CF(1) is attached to CF(0) by a central stalk formed by the gamma and epsilon chains, while a peripheral stalk is formed by the delta and b chains.

The protein localises to the cell inner membrane. The catalysed reaction is ATP + H2O + 4 H(+)(in) = ADP + phosphate + 5 H(+)(out). Functionally, produces ATP from ADP in the presence of a proton gradient across the membrane. The catalytic sites are hosted primarily by the beta subunits. In Ehrlichia ruminantium (strain Welgevonden), this protein is ATP synthase subunit beta.